Here is a 69-residue protein sequence, read N- to C-terminus: Conotoxin Lp3.1 (69 aa).

A signal peptide spans 1–20 (MLKMGVLLFIFLVLFPLTTL). The propeptide occupies 21–54 (ELDTDRPVERHAAIKQDLKPQERRGIRLHAPRDE). 3 disulfide bridges follow: cysteine 55-cysteine 67, cysteine 56-cysteine 65, and cysteine 61-cysteine 68.

This sequence belongs to the conotoxin M superfamily. Expressed by the venom duct.

It localises to the secreted. In Conus leopardus (Leopard cone), this protein is Conotoxin Lp3.1.